A 212-amino-acid chain; its full sequence is Thymidylate kinase (212 aa).

11–18 (GLEGAGKT) is an ATP binding site.

It belongs to the thymidylate kinase family.

The enzyme catalyses dTMP + ATP = dTDP + ADP. Phosphorylation of dTMP to form dTDP in both de novo and salvage pathways of dTTP synthesis. The sequence is that of Thymidylate kinase (tmk) from Buchnera aphidicola subsp. Acyrthosiphon pisum (strain APS) (Acyrthosiphon pisum symbiotic bacterium).